The sequence spans 122 residues: Immunoglobulin lambda variable 4-3 (122 aa).

An N-terminal signal peptide occupies residues 1 to 19 (MAWVSFYLLPFIFSTGLCA). The interval 20 to 44 (LPVLTQPPSASALLGASIKLTCTLS) is framework-1. One can recognise an Ig-like domain in the interval 21-122 (PVLTQPPSAS…ESHTIDGQVG (102 aa)). A disulfide bond links Cys41 and Cys111. Residues 45–51 (SEHSTYT) form a complementarity-determining-1 region. Residues 52-68 (IEWYQQRPGRSPQYIMK) form a framework-2 region. The interval 69-75 (VKSDGSH) is complementarity-determining-2. Residues 76–111 (SKGDGIPDRFMGSSSGADRYLTFSNLQSDDEAEYHC) are framework-3. The segment at 112–122 (GESHTIDGQVG) is complementarity-determining-3.

In terms of assembly, immunoglobulins are composed of two identical heavy chains and two identical light chains; disulfide-linked.

Its subcellular location is the secreted. It is found in the cell membrane. Its function is as follows. V region of the variable domain of immunoglobulin light chains that participates in the antigen recognition. Immunoglobulins, also known as antibodies, are membrane-bound or secreted glycoproteins produced by B lymphocytes. In the recognition phase of humoral immunity, the membrane-bound immunoglobulins serve as receptors which, upon binding of a specific antigen, trigger the clonal expansion and differentiation of B lymphocytes into immunoglobulins-secreting plasma cells. Secreted immunoglobulins mediate the effector phase of humoral immunity, which results in the elimination of bound antigens. The antigen binding site is formed by the variable domain of one heavy chain, together with that of its associated light chain. Thus, each immunoglobulin has two antigen binding sites with remarkable affinity for a particular antigen. The variable domains are assembled by a process called V-(D)-J rearrangement and can then be subjected to somatic hypermutations which, after exposure to antigen and selection, allow affinity maturation for a particular antigen. In Homo sapiens (Human), this protein is Immunoglobulin lambda variable 4-3.